The sequence spans 226 residues: NAD(P)H-quinone oxidoreductase subunit K, chloroplastic (226 aa).

[4Fe-4S] cluster is bound by residues cysteine 43, cysteine 44, cysteine 108, and cysteine 139.

The protein belongs to the complex I 20 kDa subunit family. In terms of assembly, NDH is composed of at least 16 different subunits, 5 of which are encoded in the nucleus. Requires [4Fe-4S] cluster as cofactor.

The protein localises to the plastid. Its subcellular location is the chloroplast thylakoid membrane. The enzyme catalyses a plastoquinone + NADH + (n+1) H(+)(in) = a plastoquinol + NAD(+) + n H(+)(out). It catalyses the reaction a plastoquinone + NADPH + (n+1) H(+)(in) = a plastoquinol + NADP(+) + n H(+)(out). Functionally, NDH shuttles electrons from NAD(P)H:plastoquinone, via FMN and iron-sulfur (Fe-S) centers, to quinones in the photosynthetic chain and possibly in a chloroplast respiratory chain. The immediate electron acceptor for the enzyme in this species is believed to be plastoquinone. Couples the redox reaction to proton translocation, and thus conserves the redox energy in a proton gradient. In Lupinus luteus (European yellow lupine), this protein is NAD(P)H-quinone oxidoreductase subunit K, chloroplastic.